The following is a 315-amino-acid chain: Tyrosine recombinase XerC (315 aa).

A Core-binding (CB) domain is found at Ala-13 to Glu-104. A Tyr recombinase domain is found at Ser-125–Asp-309. Residues Arg-168, Lys-193, His-261, Arg-264, and His-287 contribute to the active site. The O-(3'-phospho-DNA)-tyrosine intermediate role is filled by Tyr-296.

This sequence belongs to the 'phage' integrase family. XerC subfamily. Forms a cyclic heterotetrameric complex composed of two molecules of XerC and two molecules of XerD.

Its subcellular location is the cytoplasm. Its function is as follows. Site-specific tyrosine recombinase, which acts by catalyzing the cutting and rejoining of the recombining DNA molecules. The XerC-XerD complex is essential to convert dimers of the bacterial chromosome into monomers to permit their segregation at cell division. It also contributes to the segregational stability of plasmids. In Brucella melitensis biotype 1 (strain ATCC 23456 / CCUG 17765 / NCTC 10094 / 16M), this protein is Tyrosine recombinase XerC.